Reading from the N-terminus, the 351-residue chain is uncharacterized protein (351 aa).

5 residues coordinate Mn(2+): aspartate 215, aspartate 226, histidine 290, glutamate 319, and glutamate 333.

It belongs to the peptidase M24B family. Mn(2+) is required as a cofactor.

This is an uncharacterized protein from Staphylococcus epidermidis (strain ATCC 35984 / DSM 28319 / BCRC 17069 / CCUG 31568 / BM 3577 / RP62A).